Consider the following 673-residue polypeptide: Flotillin family inner membrane protein sll1021 (673 aa).

The chain crosses the membrane as a helical span at residues 60–80 (LLFFPVVIIAVIFLILVTIFL). A disordered region spans residues 639-673 (LQDPPSVSPPSAAVSEDDWPDLAPPTETNFSPEEI). The segment covering 664 to 673 (TETNFSPEEI) has biased composition (polar residues).

It belongs to the band 7/mec-2 family. Flotillin subfamily. As to quaternary structure, homooligomerizes.

The protein resides in the cell inner membrane. The protein localises to the membrane raft. In terms of biological role, found in functional membrane microdomains (FMM) that may be equivalent to eukaryotic membrane rafts. FMMs are highly dynamic and increase in number as cells age. Flotillins are thought to be important factors in membrane fluidity. The protein is Flotillin family inner membrane protein sll1021 of Synechocystis sp. (strain ATCC 27184 / PCC 6803 / Kazusa).